Here is a 164-residue protein sequence, read N- to C-terminus: Protein-export protein SecB (164 aa).

The protein belongs to the SecB family. As to quaternary structure, homotetramer, a dimer of dimers. One homotetramer interacts with 1 SecA dimer.

It is found in the cytoplasm. Functionally, one of the proteins required for the normal export of preproteins out of the cell cytoplasm. It is a molecular chaperone that binds to a subset of precursor proteins, maintaining them in a translocation-competent state. It also specifically binds to its receptor SecA. The protein is Protein-export protein SecB of Stutzerimonas stutzeri (strain A1501) (Pseudomonas stutzeri).